We begin with the raw amino-acid sequence, 372 residues long: DNA damage-repair/toleration protein DRT100 (372 aa).

The first 26 residues, 1-26 (MRKLLASPFSSLLAVVFISVISVVRC), serve as a signal peptide directing secretion. 9 LRR repeats span residues 136–158 (SLRI…IGKL), 160–183 (KLAV…TSLI), 184–205 (ELKH…DFGS), 208–230 (MLSR…ISGM), 232–254 (RLAD…MGNM), 256–277 (VLSL…SLLS), 280–302 (GLDV…FGSK), 304–326 (YLVS…LSSA), and 328–350 (FVGH…FPFD).

In terms of biological role, this protein is able to complement bacterial recA mutations, but its native function in the plant is not known. This Arabidopsis thaliana (Mouse-ear cress) protein is DNA damage-repair/toleration protein DRT100 (DRT100).